A 125-amino-acid chain; its full sequence is Methylglyoxal synthase (125 aa).

Residues 1–125 (MTERLRIALI…TAEKLIKALD (125 aa)) form the MGS-like domain. Residues H12, K16, 38-41 (TGTT), and 59-60 (SG) contribute to the substrate site. The Proton donor/acceptor role is filled by D65. A substrate-binding site is contributed by H92.

The protein belongs to the methylglyoxal synthase family.

The catalysed reaction is dihydroxyacetone phosphate = methylglyoxal + phosphate. Its function is as follows. Catalyzes the formation of methylglyoxal from dihydroxyacetone phosphate. This chain is Methylglyoxal synthase, found in Brucella anthropi (strain ATCC 49188 / DSM 6882 / CCUG 24695 / JCM 21032 / LMG 3331 / NBRC 15819 / NCTC 12168 / Alc 37) (Ochrobactrum anthropi).